A 1338-amino-acid chain; its full sequence is Vascular endothelial growth factor receptor 1 (1338 aa).

A signal peptide spans Met1 to Gly26. Residues Ser27 to Glu758 are Extracellular-facing. Ig-like C2-type domains lie at Pro32 to Ala123, Gly151 to His214, Ile230 to His327, Thr335 to Thr421, Pro428 to Thr553, Pro556 to Thr654, and Pro661 to Thr747. Cystine bridges form between Cys53–Cys107 and Cys158–Cys207. N-linked (GlcNAc...) asparagine glycans are attached at residues Asn100, Asn164, Asn196, and Asn251. A disulfide bond links Cys252 and Cys311. N-linked (GlcNAc...) asparagine glycosylation is found at Asn323, Asn402, Asn417, Asn474, Asn547, Asn597, Asn620, Asn625, and Asn666. Cys454 and Cys535 form a disulfide bridge. Cys577 and Cys636 form a disulfide bridge. An intrachain disulfide couples Cys682 to Cys731. The helical transmembrane segment at Leu759–Ile780 threads the bilayer. Residues Arg781–Ile1338 lie on the Cytoplasmic side of the membrane. The region spanning Leu827–Leu1158 is the Protein kinase domain. ATP-binding positions include Leu833–Val841 and Lys861. Tyr914 carries the post-translational modification Phosphotyrosine; by autocatalysis. The segment covering Pro940–Leu957 has biased composition (basic and acidic residues). The disordered stretch occupies residues Pro940–Glu982. Positions Ser959–Phe971 are enriched in polar residues. Catalysis depends on Asp1022, which acts as the Proton acceptor. 7 positions are modified to phosphotyrosine; by autocatalysis: Tyr1053, Tyr1169, Tyr1213, Tyr1242, Tyr1309, Tyr1327, and Tyr1333.

It belongs to the protein kinase superfamily. Tyr protein kinase family. CSF-1/PDGF receptor subfamily. As to quaternary structure, interacts with VEGFA, VEGFB and PGF. Monomer in the absence of bound VEGFA, VEGFB or PGF. Homodimer in the presence of bound VEGFA, VEGFB and PGF. Can also form a heterodimer with KDR. Interacts (when tyrosine phosphorylated) with CBL, CRK, GRB2, NCK1, PIK3R1, PLCG, PSEN1 and PTPN11. Probably also interacts with PTPRB. Interacts with RACK1. Identified in a complex with CBL and CD2AP. N-glycosylated. Post-translationally, ubiquitinated after VEGFA-mediated autophosphorylation, leading to proteolytic degradation. In terms of processing, autophosphorylated on tyrosine residues upon ligand binding. Autophosphorylation occurs in trans, i.e. one subunit of the dimeric receptor phosphorylates tyrosine residues on the other subunit. Phosphorylation at Tyr-1169 is important for interaction with PLCG. Phosphorylation at Tyr-1213 is important for interaction with PIK3R1, PTPN11, GRB2, and PLCG. Phosphorylation at Tyr-1333 is important for endocytosis and for interaction with CBL, NCK1 and CRK. Is probably dephosphorylated by PTPRB. As to expression, detected in normal lung, but also in placenta, liver, kidney, heart and brain tissues. Specifically expressed in most of the vascular endothelial cells, and also expressed in peripheral blood monocytes. Isoform 2 is strongly expressed in placenta. Isoform 3 is expressed in corneal epithelial cells (at protein level). Isoform 3 is expressed in vascular smooth muscle cells (VSMC).

The protein localises to the cell membrane. The protein resides in the endosome. It is found in the secreted. Its subcellular location is the cytoplasm. It carries out the reaction L-tyrosyl-[protein] + ATP = O-phospho-L-tyrosyl-[protein] + ADP + H(+). Present in an inactive conformation in the absence of bound ligand. Binding of VEGFA, VEGFB or PGF leads to dimerization and activation by autophosphorylation on tyrosine residues. Its function is as follows. Tyrosine-protein kinase that acts as a cell-surface receptor for VEGFA, VEGFB and PGF, and plays an essential role in the development of embryonic vasculature, the regulation of angiogenesis, cell survival, cell migration, macrophage function, chemotaxis, and cancer cell invasion. Acts as a positive regulator of postnatal retinal hyaloid vessel regression. May play an essential role as a negative regulator of embryonic angiogenesis by inhibiting excessive proliferation of endothelial cells. Can promote endothelial cell proliferation, survival and angiogenesis in adulthood. Its function in promoting cell proliferation seems to be cell-type specific. Promotes PGF-mediated proliferation of endothelial cells, proliferation of some types of cancer cells, but does not promote proliferation of normal fibroblasts (in vitro). Has very high affinity for VEGFA and relatively low protein kinase activity; may function as a negative regulator of VEGFA signaling by limiting the amount of free VEGFA and preventing its binding to KDR. Modulates KDR signaling by forming heterodimers with KDR. Ligand binding leads to the activation of several signaling cascades. Activation of PLCG leads to the production of the cellular signaling molecules diacylglycerol and inositol 1,4,5-trisphosphate and the activation of protein kinase C. Mediates phosphorylation of PIK3R1, the regulatory subunit of phosphatidylinositol 3-kinase, leading to activation of phosphatidylinositol kinase and the downstream signaling pathway. Mediates activation of MAPK1/ERK2, MAPK3/ERK1 and the MAP kinase signaling pathway, as well as of the AKT1 signaling pathway. Phosphorylates SRC and YES1, and may also phosphorylate CBL. Promotes phosphorylation of AKT1 at 'Ser-473'. Promotes phosphorylation of PTK2/FAK1. In terms of biological role, phosphorylates PLCG. May function as decoy receptor for VEGFA. Functionally, has a truncated kinase domain; it increases phosphorylation of SRC at 'Tyr-418' by unknown means and promotes tumor cell invasion. The chain is Vascular endothelial growth factor receptor 1 (FLT1) from Homo sapiens (Human).